The chain runs to 344 residues: Aurora kinase B (344 aa).

A Phosphothreonine modification is found at threonine 35. Serine 62 bears the Phosphoserine mark. Threonine 64 carries the phosphothreonine modification. In terms of domain architecture, Protein kinase spans 77-327 (FEIGRPLGKG…LAQVSAHPWV (251 aa)). Residues 83 to 91 (LGKGKFGNV) and lysine 106 contribute to the ATP site. The active-site Proton acceptor is the aspartate 200. Lysine 215 is modified (N6-acetyllysine). Serine 227 bears the Phosphoserine mark. A Phosphothreonine; by autocatalysis modification is found at threonine 232.

This sequence belongs to the protein kinase superfamily. Ser/Thr protein kinase family. Aurora subfamily. In terms of assembly, component of the chromosomal passenger complex (CPC) composed of at least BIRC5/survivin, CDCA8/borealin, INCENP, AURKB or AURKC; predominantly independent AURKB- and AURKC-containing complexes exist. Associates with RACGAP1 during M phase. Interacts with SPDYC; this interaction may be required for proper localization of active, Thr-232-phosphorylated AURKB form during prometaphase and metaphase. Interacts with p53/TP53. Interacts (via the middle kinase domain) with NOC2L (via the N- and C-terminus domains). Interacts with CDCA1. Interacts with EVI5. Interacts with JTB. Interacts with NDC80. Interacts with PSMA3. Interacts with RNF2/RING1B. Interacts with SEPTIN1. Interacts with SIRT2. Interacts with TACC1. Interacts with TTC28. In terms of processing, the phosphorylation of Thr-232 requires the binding to INCENP and occurs by means of an autophosphorylation mechanism. Thr-232 phosphorylation is indispensable for the AURKB kinase activity. Post-translationally, acetylated at Lys-215 by KAT5 at kinetochores, increasing AURKB activity and promoting accurate chromosome segregation in mitosis. Ubiquitinated by different BCR (BTB-CUL3-RBX1) E3 ubiquitin ligase complexes. Ubiquitinated by the BCR(KLHL9-KLHL13) E3 ubiquitin ligase complex, ubiquitination leads to removal from mitotic chromosomes and is required for cytokinesis. During anaphase, the BCR(KLHL21) E3 ubiquitin ligase complex recruits the CPC complex from chromosomes to the spindle midzone and mediates the ubiquitination of AURKB. Ubiquitination of AURKB by BCR(KLHL21) E3 ubiquitin ligase complex may not lead to its degradation by the proteasome. Deubiquitinated by USP35; inhibiting CDH1-mediated degradation of AURKB.

The protein localises to the nucleus. Its subcellular location is the chromosome. It is found in the centromere. The protein resides in the kinetochore. It localises to the cytoplasm. The protein localises to the cytoskeleton. Its subcellular location is the spindle. It is found in the midbody. The catalysed reaction is L-seryl-[protein] + ATP = O-phospho-L-seryl-[protein] + ADP + H(+). The enzyme catalyses L-threonyl-[protein] + ATP = O-phospho-L-threonyl-[protein] + ADP + H(+). With respect to regulation, activity is greatly increased when AURKB is within the CPC complex. In particular, AURKB-phosphorylated INCENP acts as an activator of AURKB. Positive feedback between HASPIN and AURKB contributes to CPC localization. Functionally, serine/threonine-protein kinase component of the chromosomal passenger complex (CPC), a complex that acts as a key regulator of mitosis. The CPC complex has essential functions at the centromere in ensuring correct chromosome alignment and segregation and is required for chromatin-induced microtubule stabilization and spindle assembly. Involved in the bipolar attachment of spindle microtubules to kinetochores and is a key regulator for the onset of cytokinesis during mitosis. Required for central/midzone spindle assembly and cleavage furrow formation. Key component of the cytokinesis checkpoint, a process required to delay abscission to prevent both premature resolution of intercellular chromosome bridges and accumulation of DNA damage: phosphorylates CHMP4C, leading to retain abscission-competent VPS4 (VPS4A and/or VPS4B) at the midbody ring until abscission checkpoint signaling is terminated at late cytokinesis. AURKB phosphorylates the CPC complex subunits BIRC5/survivin, CDCA8/borealin and INCENP. Phosphorylation of INCENP leads to increased AURKB activity. Other known AURKB substrates involved in centromeric functions and mitosis are CENPA, DES/desmin, GPAF, KIF2C, NSUN2, RACGAP1, SEPTIN1, VIM/vimentin, HASPIN, and histone H3. A positive feedback loop involving HASPIN and AURKB contributes to localization of CPC to centromeres. Phosphorylation of VIM controls vimentin filament segregation in cytokinetic process, whereas histone H3 is phosphorylated at 'Ser-10' and 'Ser-28' during mitosis (H3S10ph and H3S28ph, respectively). AURKB is also required for kinetochore localization of BUB1 and SGO1. Phosphorylation of p53/TP53 negatively regulates its transcriptional activity. Key regulator of active promoters in resting B- and T-lymphocytes: acts by mediating phosphorylation of H3S28ph at active promoters in resting B-cells, inhibiting RNF2/RING1B-mediated ubiquitination of histone H2A and enhancing binding and activity of the USP16 deubiquitinase at transcribed genes. Acts as an inhibitor of CGAS during mitosis: catalyzes phosphorylation of the N-terminus of CGAS during the G2-M transition, blocking CGAS liquid phase separation and activation, and thereby preventing CGAS-induced autoimmunity. Phosphorylates KRT5 during anaphase and telophase. Phosphorylates ATXN10 which promotes phosphorylation of ATXN10 by PLK1 and may play a role in the regulation of cytokinesis and stimulating the proteasomal degradation of ATXN10. The polypeptide is Aurora kinase B (AURKB) (Sus scrofa (Pig)).